Reading from the N-terminus, the 67-residue chain is MLKYPLTQAMGCDIRLTNQQSQELYKLIIVTWFYKNAKFNSGLKVIIIVRLMKIIHQKQSSIPTSTS.

This is an uncharacterized protein from Dictyostelium discoideum (Social amoeba).